A 192-amino-acid polypeptide reads, in one-letter code: dTTP/UTP pyrophosphatase (192 aa).

Asp71 acts as the Proton acceptor in catalysis.

This sequence belongs to the Maf family. YhdE subfamily. A divalent metal cation serves as cofactor.

It localises to the cytoplasm. The enzyme catalyses dTTP + H2O = dTMP + diphosphate + H(+). The catalysed reaction is UTP + H2O = UMP + diphosphate + H(+). In terms of biological role, nucleoside triphosphate pyrophosphatase that hydrolyzes dTTP and UTP. May have a dual role in cell division arrest and in preventing the incorporation of modified nucleotides into cellular nucleic acids. The polypeptide is dTTP/UTP pyrophosphatase (Pseudoalteromonas atlantica (strain T6c / ATCC BAA-1087)).